The following is a 37-amino-acid chain: Large ribosomal subunit protein bL36 (37 aa).

The protein belongs to the bacterial ribosomal protein bL36 family.

This is Large ribosomal subunit protein bL36 from Dechloromonas aromatica (strain RCB).